We begin with the raw amino-acid sequence, 347 residues long: Protein pelota homolog (347 aa).

The protein belongs to the eukaryotic release factor 1 family. Pelota subfamily. As to quaternary structure, monomer. It depends on a divalent metal cation as a cofactor.

It is found in the cytoplasm. May function in recognizing stalled ribosomes, interact with stem-loop structures in stalled mRNA molecules, and effect endonucleolytic cleavage of the mRNA. May play a role in the release non-functional ribosomes and degradation of damaged mRNAs. Has endoribonuclease activity. The polypeptide is Protein pelota homolog (Methanococcoides burtonii (strain DSM 6242 / NBRC 107633 / OCM 468 / ACE-M)).